Consider the following 190-residue polypeptide: MSIEWYAVHTYVGQEDRVQDQLMDRARRLGMYRTKIFQVLQPEEEAVEIQEGGKKVNVKRKLFPGYVFVQMDVEDDDAPGELGESWEVVRGTSGVTGFVGTATRPVPLSPEEVQRLLTSVGVAAQPVVEEAPRIKVDLKAGDMVRVTSGPFADFSGVVSEVNAPQAKVKVLVSIFGRETPVELDFSQVAK.

The KOW domain occupies 141 to 165; sequence GDMVRVTSGPFADFSGVVSEVNAPQ.

Belongs to the NusG family.

Its function is as follows. Participates in transcription elongation, termination and antitermination. In Deinococcus radiodurans (strain ATCC 13939 / DSM 20539 / JCM 16871 / CCUG 27074 / LMG 4051 / NBRC 15346 / NCIMB 9279 / VKM B-1422 / R1), this protein is Transcription termination/antitermination protein NusG.